Consider the following 366-residue polypeptide: uncharacterized protein (366 aa).

A disordered region spans residues 199 to 267 (QKKQIEDEEK…QLKDAQAKRD (69 aa)).

This is an uncharacterized protein from Haemophilus influenzae (strain ATCC 51907 / DSM 11121 / KW20 / Rd).